A 105-amino-acid chain; its full sequence is Large ribosomal subunit protein uL23 (105 aa).

It belongs to the universal ribosomal protein uL23 family. As to quaternary structure, part of the 50S ribosomal subunit. Contacts protein L29, and trigger factor when it is bound to the ribosome.

Functionally, one of the early assembly proteins it binds 23S rRNA. One of the proteins that surrounds the polypeptide exit tunnel on the outside of the ribosome. Forms the main docking site for trigger factor binding to the ribosome. The polypeptide is Large ribosomal subunit protein uL23 (Chloroherpeton thalassium (strain ATCC 35110 / GB-78)).